Consider the following 272-residue polypeptide: Phosphate import ATP-binding protein PstB 1 (272 aa).

The 242-residue stretch at 26-267 (ISIENLNLFY…PMKKQTEDYI (242 aa)) folds into the ABC transporter domain. Residue 58-65 (GPSGCGKS) participates in ATP binding.

The protein belongs to the ABC transporter superfamily. Phosphate importer (TC 3.A.1.7) family. The complex is composed of two ATP-binding proteins (PstB), two transmembrane proteins (PstC and PstA) and a solute-binding protein (PstS).

The protein localises to the cell inner membrane. It catalyses the reaction phosphate(out) + ATP + H2O = ADP + 2 phosphate(in) + H(+). In terms of biological role, part of the ABC transporter complex PstSACB involved in phosphate import. Responsible for energy coupling to the transport system. This is Phosphate import ATP-binding protein PstB 1 from Vibrio parahaemolyticus serotype O3:K6 (strain RIMD 2210633).